The following is a 492-amino-acid chain: ATP synthase subunit beta, chloroplastic (492 aa).

170 to 177 (GGAGVGKT) contributes to the ATP binding site.

The protein belongs to the ATPase alpha/beta chains family. F-type ATPases have 2 components, CF(1) - the catalytic core - and CF(0) - the membrane proton channel. CF(1) has five subunits: alpha(3), beta(3), gamma(1), delta(1), epsilon(1). CF(0) has four main subunits: a(1), b(1), b'(1) and c(9-12).

The protein resides in the plastid. It localises to the chloroplast thylakoid membrane. The enzyme catalyses ATP + H2O + 4 H(+)(in) = ADP + phosphate + 5 H(+)(out). Its function is as follows. Produces ATP from ADP in the presence of a proton gradient across the membrane. The catalytic sites are hosted primarily by the beta subunits. The polypeptide is ATP synthase subunit beta, chloroplastic (Anthoceros angustus (Hornwort)).